We begin with the raw amino-acid sequence, 116 residues long: Mercuric transport protein MerT (116 aa).

The next 2 helical transmembrane spans lie at 16 to 36 (LAAILASACCLGPLVLIALGF) and 46 to 66 (VLEPYRPIFIGVALVALFFAW). Residues Cys24 and Cys25 each contribute to the Hg(2+) site. Residues Cys76 and Cys82 each coordinate Hg(2+). A helical transmembrane segment spans residues 94–114 (IFWGVAVLVLVALGFPYVVPF).

This sequence belongs to the MerT family.

It localises to the cell inner membrane. In terms of biological role, involved in mercury resistance. Probably transfers a mercuric ion from the periplasmic Hg(2+)-binding protein MerP to the cytoplasmic mercuric reductase MerA. The protein is Mercuric transport protein MerT of Pseudomonas fluorescens.